The primary structure comprises 451 residues: Histidinol dehydrogenase (451 aa).

The segment at 1 to 20 (MLNVTDLRGHTPSKSDIRRA) is disordered. Over residues 7–19 (LRGHTPSKSDIRR) the composition is skewed to basic and acidic residues. NAD(+)-binding residues include tyrosine 129, glutamine 193, and asparagine 218. The substrate site is built by threonine 241, glutamine 263, and histidine 266. Residues glutamine 263 and histidine 266 each coordinate Zn(2+). Residues glutamate 332 and histidine 333 each act as proton acceptor in the active site. 4 residues coordinate substrate: histidine 333, aspartate 366, glutamate 420, and histidine 425. Zn(2+) is bound at residue aspartate 366. Residue histidine 425 participates in Zn(2+) binding.

It belongs to the histidinol dehydrogenase family. Zn(2+) serves as cofactor.

It carries out the reaction L-histidinol + 2 NAD(+) + H2O = L-histidine + 2 NADH + 3 H(+). It functions in the pathway amino-acid biosynthesis; L-histidine biosynthesis; L-histidine from 5-phospho-alpha-D-ribose 1-diphosphate: step 9/9. In terms of biological role, catalyzes the sequential NAD-dependent oxidations of L-histidinol to L-histidinaldehyde and then to L-histidine. The sequence is that of Histidinol dehydrogenase from Corynebacterium efficiens (strain DSM 44549 / YS-314 / AJ 12310 / JCM 11189 / NBRC 100395).